A 360-amino-acid polypeptide reads, in one-letter code: BOLA class I histocompatibility antigen, alpha chain BL3-6 (360 aa).

The first 21 residues, Met-1 to Ala-21, serve as a signal peptide directing secretion. Positions Gly-22–Ala-111 are alpha-1. The Extracellular segment spans residues Gly-22–Ile-308. Asn-107 carries N-linked (GlcNAc...) asparagine glycosylation. The tract at residues Gly-112–Ala-203 is alpha-2. 2 cysteine pairs are disulfide-bonded: Cys-122-Cys-185 and Cys-224-Cys-280. The interval Asp-204–Trp-295 is alpha-3. The region spanning Pro-206–Thr-292 is the Ig-like C1-type domain. Positions Glu-296–Ile-308 are connecting peptide. A helical membrane pass occupies residues Val-309–Met-328. Residues Lys-329–Val-360 lie on the Cytoplasmic side of the membrane. The disordered stretch occupies residues Ile-340–Val-360. The span at Gln-341 to Ser-354 shows a compositional bias: low complexity. Phosphoserine is present on residues Ser-351 and Ser-354.

It belongs to the MHC class I family. In terms of assembly, heterodimer of an alpha chain and a beta chain (beta-2-microglobulin).

Its subcellular location is the membrane. Involved in the presentation of foreign antigens to the immune system. The protein is BOLA class I histocompatibility antigen, alpha chain BL3-6 of Bos taurus (Bovine).